A 156-amino-acid polypeptide reads, in one-letter code: Small ribosomal subunit protein uS7 (156 aa).

Belongs to the universal ribosomal protein uS7 family. Part of the 30S ribosomal subunit. Contacts proteins S9 and S11.

Functionally, one of the primary rRNA binding proteins, it binds directly to 16S rRNA where it nucleates assembly of the head domain of the 30S subunit. Is located at the subunit interface close to the decoding center, probably blocks exit of the E-site tRNA. The protein is Small ribosomal subunit protein uS7 (rspG) of Streptomyces coelicolor (strain ATCC BAA-471 / A3(2) / M145).